The following is a 228-amino-acid chain: Sensory transduction protein RegX3 (228 aa).

One can recognise a Response regulatory domain in the interval 3–116 (SVLIVEDEES…ELIARIRAVL (114 aa)). Aspartate 52 bears the 4-aspartylphosphate mark. The ompR/PhoB-type DNA-binding region spans 129-228 (DGVLEAGPVR…VRGLGYKLEG (100 aa)).

Post-translationally, phosphorylated by SenX3.

Its function is as follows. Member of the two-component regulatory system SenX3/RegX3 involved in stress response. The system is involved in phosphate starvation response. Once phosphorylated by SenX3, activates the expression of the alkaline phosphatase phoA, the high-affinity phosphate transporter pstSCAB, phnDCE, phnF and senX3. May act as a negative regulator of NhaA. Acts by binding to a DNA motif consisting of an inverted repeat. This Mycolicibacterium smegmatis (strain ATCC 700084 / mc(2)155) (Mycobacterium smegmatis) protein is Sensory transduction protein RegX3.